We begin with the raw amino-acid sequence, 688 residues long: Methionine--tRNA ligase (688 aa).

A 'HIGH' region motif is present at residues 13 to 23 (PYANGPIHIGH). Zn(2+)-binding residues include Cys-144, Cys-147, Cys-157, and Cys-160. The 'KMSKS' region signature appears at 334-338 (KMSKS). Lys-337 is an ATP binding site. The tRNA-binding domain occupies 582-688 (DFAKIDLRVA…AGAVPGMRVR (107 aa)).

It belongs to the class-I aminoacyl-tRNA synthetase family. MetG type 1 subfamily. In terms of assembly, homodimer. The cofactor is Zn(2+).

Its subcellular location is the cytoplasm. The catalysed reaction is tRNA(Met) + L-methionine + ATP = L-methionyl-tRNA(Met) + AMP + diphosphate. Is required not only for elongation of protein synthesis but also for the initiation of all mRNA translation through initiator tRNA(fMet) aminoacylation. This Ralstonia nicotianae (strain ATCC BAA-1114 / GMI1000) (Ralstonia solanacearum) protein is Methionine--tRNA ligase.